Here is a 316-residue protein sequence, read N- to C-terminus: Coiled-coil domain-containing protein 42 (316 aa).

2 coiled-coil regions span residues 43–151 (RLLE…EYSI) and 182–236 (HHDL…SDVI).

The protein belongs to the CFAP73 family. In terms of assembly, interacts with ODF1 and ODF2. Interacts with CCDC38. Interacts with CCDC146. Interacts with CFAP53.

It is found in the cytoplasm. It localises to the perinuclear region. The protein resides in the cytoskeleton. Its subcellular location is the cell projection. The protein localises to the cilium. It is found in the flagellum. It localises to the microtubule organizing center. The protein resides in the centrosome. Functionally, essential for male fertility. Required for sperm development. The chain is Coiled-coil domain-containing protein 42 from Bos taurus (Bovine).